The chain runs to 547 residues: CAP-Gly domain-containing linker protein 3 (547 aa).

Positions 1 to 49 (MTKTDPAPMAPPPRGEEEEEEEEDEPVPEAPSPTQERRQKPVVHPSAPA) are disordered. The span at 16–27 (EEEEEEEEDEPV) shows a compositional bias: acidic residues. ANK repeat units lie at residues 117-155 (TDMTLLHYACKAGAHGVGDPAAAVRLSQQLLALGADVTL), 160-189 (TNMNALHYAAYFDVPDLVRVLLKGARPRVV), and 197-226 (NHGSALHIAASSLCLGAAKCLLEHGANPAL). A CAP-Gly 1 domain is found at 314–356 (GTTEFASGQWVGVELDEPEGKNDGSVGGVRYFICPPKQGLFAS). A disordered region spans residues 365–413 (DAPPSSVTSTPRTPRMDFSRVTGKGRREHKGKKKTPSSPSLGSLQQRDR). Residues 367 to 377 (PPSSVTSTPRT) show a composition bias toward low complexity. Thr374 carries the post-translational modification Phosphothreonine. Positions 387 to 399 (GKGRREHKGKKKT) are enriched in basic residues. A compositionally biased stretch (polar residues) spans 400–409 (PSSPSLGSLQ). A Phosphoserine modification is found at Ser401. One can recognise a CAP-Gly 2 domain in the interval 436-478 (GKTDFAPGYWYGIELDQPTGKHDGSVFGVRYFTCPPRHGVFAP). Residues 488 to 547 (STDSPGDSVGAKKVHQVTMTQPKRTFTTVRTPKDIASENSISRLLFCCWFPWMLRAEMQS) form a goLD region. 2 S-palmitoyl cysteine lipidation sites follow: Cys534 and Cys535.

In terms of assembly, homodimer. Interacts with AKT1 and AKT2; when AKT1 and AKT2 are phosphorylated and activated, affinity is higher for AKT2. Interacts with ZDHHC13 (via ANK repeats). Interacts with ZDHHC17 (via ANK repeats). In terms of processing, palmitoylation by ZDHHC17 regulates association with the plasma membrane.

The protein localises to the cell membrane. Its subcellular location is the cytoplasm. It is found in the golgi apparatus. The protein resides in the golgi stack. Functions as a cytoplasmic linker protein. Involved in TGN-endosome dynamics. May modulate the cellular compartmentalization of AKT kinase family and promote its cell membrane localization, thereby playing a role in glucose transport in adipocytes. This chain is CAP-Gly domain-containing linker protein 3 (CLIP3), found in Pongo abelii (Sumatran orangutan).